The following is a 160-amino-acid chain: Vegetative-specific protein V4 (160 aa).

3 consecutive repeat copies span residues 151-153 (NQP), 154-156 (NQP), and 157-159 (NQG). The tract at residues 151–159 (NQPNQPNQG) is 3 X 3 AA tandem repeats of N-Q-[PG].

Its function is as follows. Unknown. Its expression during growth is not required for growth but for the proper initiation of development, therefore playing a role in the transition from growth to development. The sequence is that of Vegetative-specific protein V4 (lmcB) from Dictyostelium discoideum (Social amoeba).